Reading from the N-terminus, the 658-residue chain is UvrABC system protein B (658 aa).

The Helicase ATP-binding domain maps to 25–182 (DSIRSGNKFN…LKLVDMGYKR (158 aa)). 38-45 (GVTGSGKT) is a binding site for ATP. Residues 91 to 114 (YYDYYQPEAYIPRQDLFIEKDSSI) carry the Beta-hairpin motif. Positions 433-596 (QVEVLFDRAK…TPRSASRNLE (164 aa)) constitute a Helicase C-terminal domain. One can recognise a UVR domain in the interval 623–658 (AKIVKELRKQMLEAAKNLEFEKAAALRDEIAKLREL).

The protein belongs to the UvrB family. In terms of assembly, forms a heterotetramer with UvrA during the search for lesions. Interacts with UvrC in an incision complex.

Its subcellular location is the cytoplasm. Its function is as follows. The UvrABC repair system catalyzes the recognition and processing of DNA lesions. A damage recognition complex composed of 2 UvrA and 2 UvrB subunits scans DNA for abnormalities. Upon binding of the UvrA(2)B(2) complex to a putative damaged site, the DNA wraps around one UvrB monomer. DNA wrap is dependent on ATP binding by UvrB and probably causes local melting of the DNA helix, facilitating insertion of UvrB beta-hairpin between the DNA strands. Then UvrB probes one DNA strand for the presence of a lesion. If a lesion is found the UvrA subunits dissociate and the UvrB-DNA preincision complex is formed. This complex is subsequently bound by UvrC and the second UvrB is released. If no lesion is found, the DNA wraps around the other UvrB subunit that will check the other stand for damage. The protein is UvrABC system protein B of Campylobacter fetus subsp. fetus (strain 82-40).